The primary structure comprises 77 residues: uncharacterized protein (77 aa).

2 4Fe-4S ferredoxin-type domains span residues Val3–Asp32 and Lys36–Val65. [4Fe-4S] cluster-binding residues include Cys12, Cys15, Cys18, Cys22, Cys45, Cys48, Cys51, and Cys55.

[4Fe-4S] cluster is required as a cofactor.

Functionally, ferredoxins are iron-sulfur proteins that transfer electrons probably in the CO-dehydrogenase complex. This is an uncharacterized protein from Methanocaldococcus jannaschii (strain ATCC 43067 / DSM 2661 / JAL-1 / JCM 10045 / NBRC 100440) (Methanococcus jannaschii).